We begin with the raw amino-acid sequence, 315 residues long: Gamma-hemolysin component C (315 aa).

The signal sequence occupies residues 1–29 (MLKNKILTTTLSVSLLAPLANPLLENAKA).

The protein belongs to the aerolysin family. As to quaternary structure, toxicity requires sequential binding and synergistic association of a class S and a class F component which form heterooligomeric complexes. HlgB (class F) associates with either hlgA thus forming an AB toxin or with hlgC thus forming a CB toxin.

It is found in the secreted. Functionally, toxin that seems to act by forming pores in the membrane of the cell. Has a hemolytic and a leucotoxic activity. The polypeptide is Gamma-hemolysin component C (hlgC) (Staphylococcus aureus (strain NCTC 8325 / PS 47)).